We begin with the raw amino-acid sequence, 713 residues long: MKKFLKSTAALALGLSLTFGLFSPAQAAPDTSVSNKQNFSTDVIYQIFTDRFSDGNPANNPTGAAFDGTCTNLRLYCGGDWQGIINKINDGYLTGMGVTAIWISQPVENIYSIINYSGVNNTAYHGYWARDFKKTNPAYGTIADFQNLIAAAHAKNIKVIIDFAPNHTSPASSDQPSFAENGRLYDNGTLLGGYTNDTQNLFHHNGGTDFSTTENGIYKNLYDLADLNHNNSTVDVYLKDAIKMWLDLGIDGIRMDAVKHMPFGWQKSFMAAVNNYKPVFTFGEWFLGVNEVSPENHKFANESGMSLLDFRFAQKVRQVFRDNTDNMYGLKAMLEGSAADYAQVDDQVTFIDNHDMERFHASNANRRKLEQALAFTLTSRGVPAIYYGTEQYMSGGTDPDNRARIPSFSTSTTAYQVIQKLAPLRKCNPAIAYGSTQERWINNDVLIYERKFGSNVAVVAVNRNLNAPASISGLVTSLPQGSYNDVLGGLLNGNTLSVGSGGAASNFTLAAGGTAVWQYTAATATPTIGHVGPMMAKPGVTITIDGRGFGSSKGTVYFGTTAVSGADITSWEDTQIKVKIPAVAGGNYNIKVANAAGTASNVYDNFEVLSGDQVSVRFVVNNATTALGQNVYLTGSVSELGNWDPAKAIGPMYNQVVYQYPNWYYDVSVPAGKTIEFKFLKKQGSTVTWEGGSNHTFTAPSSGTATINVNWQP.

The first 27 residues, 1-27 (MKKFLKSTAALALGLSLTFGLFSPAQA), serve as a signal peptide directing secretion. The interval 28–165 (APDTSVSNKQ…NIKVIIDFAP (138 aa)) is A1. Residues Asp-54, Asn-56, Asn-59, and Asn-60 each contribute to the Ca(2+) site. Cys-70 and Cys-77 are joined by a disulfide. 2 residues coordinate Ca(2+): Gly-78 and Asp-80. Residue 127 to 128 (YW) coordinates substrate. Residue Asn-166 participates in Ca(2+) binding. A b region spans residues 166 to 229 (NHTSPASSDQ…NLYDLADLNH (64 aa)). Substrate contacts are provided by residues His-167 and 172–174 (SSD). Ile-217 is a binding site for Ca(2+). Substrate is bound at residue 220 to 223 (NLYD). A Ca(2+)-binding site is contributed by Asp-226. Residues 230-433 (NNSTVDVYLK…LRKCNPAIAY (204 aa)) form an A2 region. Arg-254 serves as a coordination point for substrate. Catalysis depends on Asp-256, which acts as the Nucleophile. 259 to 260 (KH) is a binding site for substrate. Ca(2+) is bound at residue His-260. Glu-284 serves as the catalytic Proton donor. Residue Ala-342 participates in Ca(2+) binding. Substrate is bound by residues His-354, Asp-398, and Arg-402. The tract at residues 434 to 522 (GSTQERWINN…GTAVWQYTAA (89 aa)) is c. The segment at 523–609 (TATPTIGHVG…SNVYDNFEVL (87 aa)) is d. One can recognise an IPT/TIG domain in the interval 526–607 (PTIGHVGPMM…TASNVYDNFE (82 aa)). Asp-604 contacts Ca(2+). Positions 608–713 (VLSGDQVSVR…TATINVNWQP (106 aa)) constitute a CBM20 domain. Residues 610–713 (SGDQVSVRFV…TATINVNWQP (104 aa)) are e.

The protein belongs to the glycosyl hydrolase 13 family. As to quaternary structure, monomer. The cofactor is Ca(2+).

It localises to the secreted. It catalyses the reaction Cyclizes part of a (1-&gt;4)-alpha-D-glucan chain by formation of a (1-&gt;4)-alpha-D-glucosidic bond.. The protein is Cyclomaltodextrin glucanotransferase (cgt) of Niallia circulans (Bacillus circulans).